Here is a 357-residue protein sequence, read N- to C-terminus: Glutamine synthetase (357 aa).

Residues 25–104 (VMAEYIWIDA…VLCETWDSDG (80 aa)) form the GS beta-grasp domain. Residues 111 to 357 (YRHDCARLME…IIAETLCGGL (247 aa)) form the GS catalytic domain.

It belongs to the glutamine synthetase family. As to quaternary structure, homooctamer.

Its subcellular location is the cytoplasm. It carries out the reaction L-glutamate + NH4(+) + ATP = L-glutamine + ADP + phosphate + H(+). In Emericella nidulans (strain FGSC A4 / ATCC 38163 / CBS 112.46 / NRRL 194 / M139) (Aspergillus nidulans), this protein is Glutamine synthetase (glnA).